A 160-amino-acid polypeptide reads, in one-letter code: Ribosomal RNA large subunit methyltransferase H (160 aa).

Residues Leu76, Gly108, and 127–132 contribute to the S-adenosyl-L-methionine site; that span reads FGFMTW.

This sequence belongs to the RNA methyltransferase RlmH family. In terms of assembly, homodimer.

It is found in the cytoplasm. It carries out the reaction pseudouridine(1915) in 23S rRNA + S-adenosyl-L-methionine = N(3)-methylpseudouridine(1915) in 23S rRNA + S-adenosyl-L-homocysteine + H(+). Functionally, specifically methylates the pseudouridine at position 1915 (m3Psi1915) in 23S rRNA. This chain is Ribosomal RNA large subunit methyltransferase H, found in Bartonella tribocorum (strain CIP 105476 / IBS 506).